The primary structure comprises 91 residues: Small ribosomal subunit protein uS19 (91 aa).

Belongs to the universal ribosomal protein uS19 family.

Functionally, protein S19 forms a complex with S13 that binds strongly to the 16S ribosomal RNA. The polypeptide is Small ribosomal subunit protein uS19 (Cupriavidus pinatubonensis (strain JMP 134 / LMG 1197) (Cupriavidus necator (strain JMP 134))).